Reading from the N-terminus, the 426-residue chain is MAPEPEDDIMNEKNPRPLDEDDIALLKTYGLGPYSTSIKKVEKEIKEMAKKINDLCGIKESDTGLAPPSQWDLVSDKQMMQEEQPLQVARCTKIISPNTDDAKYVINVKQIAKFVVGLGDKVSPTDIEEGMRVGVDRNKYQIQIPLPPKIDPSVTMMTVEEKPDVTYNDVGGCKEQIEKMREVVELPMLHPEKFVKLGIDPPKGVLCYGPPGTGKTLLARAVANRTDACFIRVIGSELVQKYVGEGARMVRELFQMARSKKACIVFFDEVDAIGGARFDDGVGGDNEVQRTMLEIVNQLDGFDARGNIKVLMATNRPDTLDPALLRPGRLDRKVEFGLPDLEGRTQIFKIHTRTMNCERDIRFELLARLCPNSTGADIRSVCTEAGMYAIRARRKTVTEKDFLDAVNKVIKGYQKFSATPKYMVYN.

209 to 216 (GPPGTGKT) provides a ligand contact to ATP.

Belongs to the AAA ATPase family.

It localises to the cytoplasm. Its subcellular location is the nucleus. Its function is as follows. The 26S proteasome is involved in the ATP-dependent degradation of ubiquitinated proteins. The regulatory (or ATPase) complex confers ATP dependency and substrate specificity to the 26S complex. This chain is 26S proteasome regulatory subunit 7B (RPT1B), found in Oryza sativa subsp. japonica (Rice).